Consider the following 263-residue polypeptide: uncharacterized protein (263 aa).

A run of 7 helical transmembrane segments spans residues Met-1–Gln-21, Leu-38–Tyr-58, Ile-82–Val-102, Gly-118–Tyr-138, Gly-151–Leu-171, Phe-196–Thr-216, and Phe-230–Val-250.

Its subcellular location is the membrane. This is an uncharacterized protein from Saccharomyces cerevisiae (strain ATCC 204508 / S288c) (Baker's yeast).